The chain runs to 53 residues: uncharacterized protein (53 aa).

2 helical membrane passes run 3–22 and 26–45; these read LFGM…GVLL and AFFF…FTVL.

The protein localises to the cell membrane. This is an uncharacterized protein from Bacillus subtilis (strain 168).